A 268-amino-acid polypeptide reads, in one-letter code: Tryptophan synthase alpha chain (268 aa).

Catalysis depends on proton acceptor residues E49 and D60.

The protein belongs to the TrpA family. Tetramer of two alpha and two beta chains.

The catalysed reaction is (1S,2R)-1-C-(indol-3-yl)glycerol 3-phosphate + L-serine = D-glyceraldehyde 3-phosphate + L-tryptophan + H2O. It participates in amino-acid biosynthesis; L-tryptophan biosynthesis; L-tryptophan from chorismate: step 5/5. The alpha subunit is responsible for the aldol cleavage of indoleglycerol phosphate to indole and glyceraldehyde 3-phosphate. In Escherichia coli O139:H28 (strain E24377A / ETEC), this protein is Tryptophan synthase alpha chain.